We begin with the raw amino-acid sequence, 500 residues long: Protein shisa-6 (500 aa).

A signal peptide spans methionine 1–glycine 25. Residues alanine 26–threonine 174 lie on the Extracellular side of the membrane. N-linked (GlcNAc...) asparagine glycosylation is found at asparagine 32 and asparagine 59. The tract at residues alanine 52 to arginine 73 is disordered. The chain crosses the membrane as a helical span at residues asparagine 175–alanine 195. Over lysine 196–valine 500 the chain is Cytoplasmic. Positions threonine 240–histidine 255 are enriched in polar residues. Disordered stretches follow at residues threonine 240–proline 269 and serine 349–leucine 378. A phosphoserine mark is found at serine 391, serine 397, and serine 409. At threonine 433 the chain carries Phosphothreonine. Residues methionine 444 to phenylalanine 470 are disordered. Polar residues predominate over residues proline 448–alanine 464. Threonine 477 carries the post-translational modification Phosphothreonine. Positions glutamate 497–valine 500 match the PDZ-binding motif.

Belongs to the shisa family. As to quaternary structure, component of the postsynaptic hippocampal AMPA-type glutamate receptor (AMPAR) complex, at least composed of pore forming AMPAR subunits GRIA1, GRIA2 and GRIA3 and AMPAR auxiliary proteins SHISA6 and SHISA7. Interacts (via PDZ-binding motif) with DLG4/PSD-95 (via PDZ domain); the interaction is direct. Expressed in the developing ventral mesencephalon.

It localises to the membrane. The protein resides in the postsynaptic density. Functionally, involved in maintenance of high-frequency synaptic transmission at hippocampal CA3-CA1 synapses. Regulates AMPA-type glutamate receptor (AMPAR) immobilization at postsynaptic density keeping the channels in an activated state in the presence of glutamate and preventing synaptic depression. May play a role in self-renewal and differentiation of spermatogonial stem cells by inhibiting canonical Wnt signaling pathway. This Homo sapiens (Human) protein is Protein shisa-6.